Reading from the N-terminus, the 264-residue chain is Thymidylate synthase (264 aa).

Arg-21 contacts dUMP. Residue His-51 participates in (6R)-5,10-methylene-5,6,7,8-tetrahydrofolate binding. A dUMP-binding site is contributed by Arg-126–Arg-127. Cys-146 serves as the catalytic Nucleophile. DUMP contacts are provided by residues Arg-166–Asp-169, Asn-177, and His-207–Tyr-209. Asp-169 contributes to the (6R)-5,10-methylene-5,6,7,8-tetrahydrofolate binding site. Residue Ala-263 participates in (6R)-5,10-methylene-5,6,7,8-tetrahydrofolate binding.

This sequence belongs to the thymidylate synthase family. Bacterial-type ThyA subfamily. Homodimer.

It is found in the cytoplasm. The catalysed reaction is dUMP + (6R)-5,10-methylene-5,6,7,8-tetrahydrofolate = 7,8-dihydrofolate + dTMP. The protein operates within pyrimidine metabolism; dTTP biosynthesis. Catalyzes the reductive methylation of 2'-deoxyuridine-5'-monophosphate (dUMP) to 2'-deoxythymidine-5'-monophosphate (dTMP) while utilizing 5,10-methylenetetrahydrofolate (mTHF) as the methyl donor and reductant in the reaction, yielding dihydrofolate (DHF) as a by-product. This enzymatic reaction provides an intracellular de novo source of dTMP, an essential precursor for DNA biosynthesis. This is Thymidylate synthase from Klebsiella pneumoniae subsp. pneumoniae (strain ATCC 700721 / MGH 78578).